Consider the following 1353-residue polypeptide: Xanthine dehydrogenase 2 (1353 aa).

Positions 7–93 (MEAIMYVNGV…GMHVISIEGV (87 aa)) constitute a 2Fe-2S ferredoxin-type domain. [2Fe-2S] cluster contacts are provided by Cys-45, Cys-50, Cys-53, Cys-75, Cys-115, Cys-118, Cys-151, and Cys-153. Residues 249–434 (GGNEGITWYR…LSVFLPWTRP (186 aa)) enclose the FAD-binding PCMH-type domain. FAD-binding positions include 277–284 (LLVGNTEV), Phe-357, 367–371 (CIGGN), Asp-380, Leu-424, and Lys-442. Residues Gln-788 and Phe-819 each coordinate Mo-molybdopterin. The substrate site is built by Glu-823 and Arg-901. Position 933 (Arg-933) interacts with Mo-molybdopterin. 2 residues coordinate substrate: Phe-935 and Thr-1031. Mo-molybdopterin is bound at residue Ala-1100. Glu-1289 acts as the Proton acceptor in catalysis.

The protein belongs to the xanthine dehydrogenase family. As to quaternary structure, homodimer. Requires [2Fe-2S] cluster as cofactor. FAD is required as a cofactor. Mo-molybdopterin serves as cofactor. As to expression, expressed in roots, leaves, stems, flowers and siliques.

It carries out the reaction xanthine + NAD(+) + H2O = urate + NADH + H(+). It catalyses the reaction hypoxanthine + NAD(+) + H2O = xanthine + NADH + H(+). Functionally, key enzyme involved in purine catabolism. Catalyzes the oxidation of hypoxanthine to xanthine and the oxidation of xanthine to urate. Regulates the level of ureides and plays a role during plant growth and development and senescence. This Arabidopsis thaliana (Mouse-ear cress) protein is Xanthine dehydrogenase 2 (XDH2).